A 1006-amino-acid chain; its full sequence is Unconventional myosin-Id (1006 aa).

An N-acetylalanine modification is found at A2. Residues 9–695 (FGKADFVLMD…TLFTLEELRA (687 aa)) form the Myosin motor domain. Residue 102–109 (GESGAGKT) coordinates ATP. S200 carries the phosphoserine modification. Y536 is modified (phosphotyrosine). Residues 572-594 (MIALVDNLASKEPYYVRCIKPND) are actin-binding. 2 consecutive IQ domains span residues 699–719 (VRVV…MRYK) and 721–741 (TKAA…SYIH). The interaction with calmodulin stretch occupies residues 776–896 (LQSIFNRWRA…MDPTKQYKVM (121 aa)). One can recognise a TH1 domain in the interval 812–1005 (GQRADLGLQR…RSGFILSVPG (194 aa)).

The protein belongs to the TRAFAC class myosin-kinesin ATPase superfamily. Myosin family. In terms of assembly, interacts (via the two IQ motifs) with calmodulin. Binds an additional calmodulin chain via a third, C-terminal region. Interacts with F-actin. As to expression, detected on tracheal epithelial cells, and on epithelial cells and brush border cells in duodenum, jejunum and ileum. Detected on myelinated white matter in the cerebellum, and the myelinated part of the optic nerve. Detected on mature oligodendrocites. Detected on the outside of the myelin sheet that surrounds axons (at protein level). Ubiquitous. Highest levels in adult brain, and spinal cord. Moderate levels in lung, kidney, liver and spleen. Low levels in testis and heart (at protein level).

The protein localises to the cytoplasm. It localises to the perikaryon. The protein resides in the cell projection. Its subcellular location is the dendrite. It is found in the early endosome. The protein localises to the cell cortex. In terms of biological role, unconventional myosin that functions as actin-based motor protein with ATPase activity. Plays a role in endosomal protein trafficking, and especially in the transfer of cargo proteins from early to recycling endosomes. Required for normal planar cell polarity in ciliated tracheal cells, for normal rotational polarity of cilia, and for coordinated, unidirectional ciliary movement in the trachea. Required for normal, polarized cilia organization in brain ependymal epithelial cells. The chain is Unconventional myosin-Id (Myo1d) from Rattus norvegicus (Rat).